The chain runs to 450 residues: Endosomal transmembrane epsin interactor 1 (450 aa).

A signal peptide spans 1–29 (MILLVNLFVLLSVVCVLLNLAGFILGCQG). Residues 30-85 (AQFVSSVPRCDLVDLGEGKICFCCEEFQPAKCTDKENALKLFPVQPCSAVHLLLKK) lie on the Lumenal side of the membrane. Residues 86–106 (VLFALCALNALTTTVCLVAAA) traverse the membrane as a helical segment. The Cytoplasmic segment spans residues 107–450 (LRYLQIFATR…LIGVIRETVL (344 aa)). The tract at residues 107–450 (LRYLQIFATR…LIGVIRETVL (344 aa)) is mediates interaction with EPN1. 2 short sequence motifs (PPxY; mediates interaction with ITCH) span residues 148-151 (PPSY) and 194-197 (PPPY). The disordered stretch occupies residues 235 to 284 (DGDIPNIPAEENASTSTPSSTLVRPIRSRRALPPLRTRSKSDPVLHPSEE). Over residues 246-256 (NASTSTPSSTL) the composition is skewed to polar residues. Positions 273–284 (SKSDPVLHPSEE) are enriched in basic and acidic residues. K274 participates in a covalent cross-link: Glycyl lysine isopeptide (Lys-Gly) (interchain with G-Cter in ubiquitin). Residue S275 is modified to Phosphoserine. Glycyl lysine isopeptide (Lys-Gly) (interchain with G-Cter in ubiquitin) cross-links involve residues K329 and K365.

It belongs to the ENTREP family. As to quaternary structure, interacts with ITCH; enhances the ubiquitination of CXCR4 by ITCH and the subsequent endocytosis and desensitization of the receptor. Interacts with EPN1. In terms of processing, monoubiquitinated at Lys-274, Lys-329 and Lys-365 by ITCH. Prominently expressed in muscle.

It is found in the early endosome membrane. The protein resides in the late endosome membrane. Its subcellular location is the recycling endosome membrane. The protein localises to the cell membrane. Its function is as follows. Functions as an activator of the E3 ubiquitin protein ligase ITCH in the ubiquitination of the CXCL12-activated CXCR4 receptor. Thereby, triggers CXCR4 endocytosis and desensitization, negatively regulating the CXCL12/CXCR4 signaling pathway. The sequence is that of Endosomal transmembrane epsin interactor 1 from Homo sapiens (Human).